Consider the following 449-residue polypeptide: UDP-N-acetylmuramate--L-alanine ligase (449 aa).

Residue G110 to T116 participates in ATP binding.

This sequence belongs to the MurCDEF family.

It localises to the cytoplasm. The enzyme catalyses UDP-N-acetyl-alpha-D-muramate + L-alanine + ATP = UDP-N-acetyl-alpha-D-muramoyl-L-alanine + ADP + phosphate + H(+). The protein operates within cell wall biogenesis; peptidoglycan biosynthesis. Cell wall formation. This is UDP-N-acetylmuramate--L-alanine ligase from Desulfitobacterium hafniense (strain Y51).